The chain runs to 983 residues: MAGEDPYIMGVSDPQMFAMDQLMGMSTIFNNTGYITSDLPLRTADGPYLQIIEQPKQRGFRFRYVCEGPSHGGLPGASSEKNKKSYPQVKICNYVGPAKVIVQLVTNGKYVHLHAHSLVGKFCEDGVCTVNAGPKDMVVGFANLGILHVTKKKVFETLETRMIDACKKGYNPGLLVHPELGYLQAEGCGDRQLTEREREIIRQAAVQQTKEMDLSVVRLMFTAFLPDSNGGFTRRLDPVISDAIYDSKAPNASNLKIVRMDRTAGCVTGGEEIYLLCDKVQKDDIQIRFYEEDENGGMWEGFGDFSPTDVHRQFAIVFKTPKYRDVNITKPASVFVQLRRKSDLETSEPKPFLYYPEIKDKEEVQRKRQKLMPNFSDGYGGGSGAGGGGMFGGGGGGAGSGFSYPSYGYSAFGGMHFHPGTTKSNAGMKHELSNSTVKKDEESSDKQSDKWDTKHDVKVETVEKNECRTSGHNEEKEDASLCCKDEGNKPKCGCQDGLFLEKAMQLAKRHCNALFDYAVTGDVRMLLAVQRHLTAVQDDNGDNVLHLSIIHLHRELVKNLLEVMPDMNYNNIINMRNDLYQTPLHLAVITKQAEVVEDLLKAGANVNLLDRHGNSVLHLAAAEGDDKILSLLLKHQKASSMIDLSNGEGLSAIHMVVTANSLSCLKLLIAAGVDVNAQEQKSGRTALHLAVEQENVPLAGCLLLEGDADVDSTTYDGTTPLHIAAGRGFTKLAAVLKAAGADPHVENFEPLFDVEEDVKDDDDDEGIVPGTTPLDMAANWEVYDILNGKPYIAAAAVSEDLLSQGPLRELNESSKQQLYKLLETPDPSKNWSTLAEKLGLGILNNAFRLSPSPSKTLLDNYKISGGTVQELIAALTQMDHTEAIEVIQKALSSSQRQSHQEDNTIEAFPSLSPTSFAKEETGELYNHKFQDPESTCDSGVETSFRKLSFTYSDSLNSKSSITLSKMTLGYRKAQCKAVIYLTR.

In terms of domain architecture, RHD spans 47–372; sequence PYLQIIEQPK…EVQRKRQKLM (326 aa). An S-nitrosocysteine modification is found at Cys66. Ser342 bears the Phosphoserine; by PKA mark. The Nuclear localization signal motif lies at 365 to 370; sequence QRKRQK. The interval 377 to 397 is GRR; the sequence is DGYGGGSGAGGGGMFGGGGGG. The tract at residues 423–454 is disordered; sequence KSNAGMKHELSNSTVKKDEESSDKQSDKWDTK. Residues 428-454 are compositionally biased toward basic and acidic residues; it reads MKHELSNSTVKKDEESSDKQSDKWDTK. 7 ANK repeats span residues 540 to 569, 579 to 608, 612 to 641, 648 to 677, 682 to 712, 716 to 745, and 769 to 799; these read NGDN…DMNY, LYQT…NVNL, HGNS…ASSM, EGLS…DVNA, SGRT…DVDS, DGTT…DPHV, and PGTT…AVSE. In terms of domain architecture, Death spans 804 to 891; that stretch reads QGPLRELNES…EAIEVIQKAL (88 aa). Ser938 is subject to Phosphoserine.

Active NF-kappa-B is a heterodimer of an about 50 kDa DNA-binding subunit and the weak DNA-binding subunit p65. Two heterodimers might form a labile tetramer. Post-translationally, generation of the NF-kappa-B p50 (Nuclear factor NF-kappa-B p50 subunit) transcription factor takes place both cotranslationally and post-translationally via non-mutually exclusive mechanisms. A cotranslational processing allows the production of both p50 and p105 (Nuclear factor NF-kappa-B p105 subunit) from a single NFKB1 mRNA. While translation occurs, the particular unfolded structure after the GRR repeat region acts as a substrate for the proteasome, promoting degradation of the C-terminus. The GRR acts as a proteasomal 'stop signal', protecting the region upstream of the GRR from degradation and promoting generation of p50. It is unclear if limited proteasome degradation during cotranslational processing depends on ubiquitination. NF-kappa-B p50 is also generated post-translationally following ubiquitination by the KPC complex, leading to limited processing by the proteasome downstream of the GRR region, thereby generating p50. In terms of processing, phosphorylation at the C-terminus by IKBKB/IKKB acts as a signal for ubiquitination and promotes either complete degradation or processing to generate the NF-kappa-B p50 (Nuclear factor NF-kappa-B p50 subunit). Phosphorylation at Ser-938 are required for BTRC/BTRCP-mediated ubiquitination and proteolysis. Phosphorylation at Ser-938 is also required for ubiquitination by the KPC complex and limited processing to generate NF-kappa-B p50 (Nuclear factor NF-kappa-B p50 subunit). Polyubiquitinated at multiple Lys residues in the C-terminus. Polyubiquitinated by the SCF(FBXW11) and SCF(BTRC) complexes following phosphorylation at Ser-938, leading to its complete degradation. In contrast, polyubiquitination by the KPC complex following phosphorylation at Ser-938 leads to limited proteosomal processing and generation of the active NF-kappa-B p50 (Nuclear factor NF-kappa-B p50 subunit). Post-translationally, S-nitrosylation of Cys-66 affects DNA binding. In terms of processing, the covalent modification of cysteine by 15-deoxy-Delta12,14-prostaglandin-J2 is autocatalytic and reversible. It may occur as an alternative to other cysteine modifications, such as S-nitrosylation and S-palmitoylation.

Its subcellular location is the cytoplasm. It localises to the nucleus. In terms of biological role, P105 is the precursor of the active p50 subunit (Nuclear factor NF-kappa-B p50 subunit) of the nuclear factor NF-kappa-B. The precursor protein itself does not bind to DNA. Acts as a cytoplasmic retention of attached NF-kappa-B proteins by p105. Functionally, constitutes the active form, which associates with RELA/p65 to form the NF-kappa-B p65-p50 complex to form a transcription factor. Together with RELA/p65, binds to the kappa-B consensus sequence 5'-GGRNNYYCC-3', located in the enhancer region of genes involved in immune response and acute phase reactions. This is Nuclear factor NF-kappa-B p105 subunit (NFKB1) from Gallus gallus (Chicken).